The primary structure comprises 385 residues: Probable alpha-galactosidase (385 aa).

A signal peptide spans 1–19 (MMKIAATLLATIALATVNA). 2 cysteine pairs are disulfide-bonded: Cys40–Cys72 and Cys119–Cys149. The Nucleophile role is filled by Asp147. Residue 180 to 184 (DWGYE) coordinates substrate. Asp202 (proton donor) is an active-site residue.

It belongs to the glycosyl hydrolase 27 family.

The enzyme catalyses Hydrolysis of terminal, non-reducing alpha-D-galactose residues in alpha-D-galactosides, including galactose oligosaccharides, galactomannans and galactolipids.. This is Probable alpha-galactosidase (melA) from Dictyostelium discoideum (Social amoeba).